The following is a 51-amino-acid chain: Large ribosomal subunit protein bL33 (51 aa).

It belongs to the bacterial ribosomal protein bL33 family.

This is Large ribosomal subunit protein bL33 from Psychrobacter sp. (strain PRwf-1).